Reading from the N-terminus, the 334-residue chain is Fructose-1,6-bisphosphatase class 1 (334 aa).

The Mg(2+) site is built by E93, D117, L119, and D120. Residues 120-123, N213, Y244, and K274 contribute to the substrate site; that span reads DGSS. Mg(2+) is bound at residue E280.

Belongs to the FBPase class 1 family. As to quaternary structure, homotetramer. The cofactor is Mg(2+).

Its subcellular location is the cytoplasm. The enzyme catalyses beta-D-fructose 1,6-bisphosphate + H2O = beta-D-fructose 6-phosphate + phosphate. The protein operates within carbohydrate biosynthesis; gluconeogenesis. The chain is Fructose-1,6-bisphosphatase class 1 from Flavobacterium johnsoniae (strain ATCC 17061 / DSM 2064 / JCM 8514 / BCRC 14874 / CCUG 350202 / NBRC 14942 / NCIMB 11054 / UW101) (Cytophaga johnsonae).